The sequence spans 471 residues: Plant intracellular Ras-group-related LRR protein 2 (471 aa).

A coiled-coil region spans residues 106-133 (VVRLDEVHDSYEKKLKDTEEELSRVYST). LRR repeat units lie at residues 159–182 (GGTV…FWKV), 183–205 (VGLV…ISKL), 206–229 (KKLE…GMLL), 231–251 (LRIL…IAHC), 253–275 (SLVE…GYGL), 276–298 (QNLE…ISEM), 300–321 (NLKY…IGRL), 324–346 (LEVL…ITDL), 347–369 (TNLR…FYRL), and 371–392 (KLEK…VATQ). The short motif at 393–405 (GAEVVREFMRKRW) is the GVYW; degenerate element.

Belongs to the SHOC2 family. Widely expressed but preferentially in roots.

Functionally, leucine-rich repeat protein that likely mediates protein interactions, possibly in the context of signal transduction. This chain is Plant intracellular Ras-group-related LRR protein 2 (PIRL2), found in Arabidopsis thaliana (Mouse-ear cress).